Consider the following 110-residue polypeptide: DNA-binding protein Pars_1791 (110 aa).

Belongs to the PDCD5 family.

This is DNA-binding protein Pars_1791 from Pyrobaculum arsenaticum (strain DSM 13514 / JCM 11321 / PZ6).